The sequence spans 629 residues: Extracellular metalloproteinase 10 (629 aa).

A signal peptide spans 1 to 19; that stretch reads MHGLLLAAGLLSLPLYTIA. A propeptide spanning residues 20 to 240 is cleaved from the precursor; sequence HTQPSGALSR…VHNVVDYVAH (221 aa). N-linked (GlcNAc...) asparagine glycosylation is found at N281 and N331. Zn(2+) is bound at residue H424. Residue E425 is part of the active site. A Zn(2+)-binding site is contributed by H428. N-linked (GlcNAc...) asparagine glycosylation is found at N469 and N617.

This sequence belongs to the peptidase M36 family. Zn(2+) serves as cofactor.

The protein resides in the secreted. In terms of biological role, secreted metalloproteinase that allows assimilation of proteinaceous substrates and probably acts as a virulence factor. The protein is Extracellular metalloproteinase 10 (MEP10) of Coccidioides posadasii (strain C735) (Valley fever fungus).